The sequence spans 295 residues: F-box protein SKIP24 (295 aa).

The region spanning 19–66 (VKSSTFSYKDLCCISISSRRLFRLSCDDSLWDLLLVHDFPNHIVSASS) is the F-box; degenerate domain. Coiled-coil stretches lie at residues 82–129 (REKE…SSLQ) and 167–209 (EGRL…ESMK). Residues 217–245 (KSIRNGDQGSNGKTKKLKTSINYSGDQVS) are disordered. The segment covering 235–245 (TSINYSGDQVS) has biased composition (polar residues).

In terms of assembly, part of a SCF (ASK-cullin-F-box) protein ligase complex. Interacts with SKP1A/ASK1 and SPK1B/ASK2.

It participates in protein modification; protein ubiquitination. Its function is as follows. Component of SCF(ASK-cullin-F-box) E3 ubiquitin ligase complexes, which may mediate the ubiquitination and subsequent proteasomal degradation of target proteins. This Arabidopsis thaliana (Mouse-ear cress) protein is F-box protein SKIP24 (SKIP24).